Here is a 204-residue protein sequence, read N- to C-terminus: Recombination protein RecR (204 aa).

A C4-type zinc finger spans residues 63–78; sequence CRRCFNITVGELCAIC. Residues 86–181 form the Toprim domain; that stretch reads TKICVVEEPL…RVTRPARGLP (96 aa).

This sequence belongs to the RecR family.

Its function is as follows. May play a role in DNA repair. It seems to be involved in an RecBC-independent recombinational process of DNA repair. It may act with RecF and RecO. In Chloroflexus aurantiacus (strain ATCC 29366 / DSM 635 / J-10-fl), this protein is Recombination protein RecR.